The chain runs to 412 residues: G-protein coupled receptor homolog UL33 (412 aa).

At 1–35 (MDTIIHNTTNRSTDTPHVNITCNITEPLSAIRTTE) the chain is on the virion surface side. N-linked (GlcNAc...) asparagine; by host glycosylation is found at N7, N19, and N23. The chain crosses the membrane as a helical span at residues 36–56 (AVINTFIIFVGGPLNAIVLIT). At 57–80 (QLLTNRVLGYSTPTIYMTNLYSTN) the chain is on the intravirion side. The chain crosses the membrane as a helical span at residues 81–101 (FLTLTVLPFIVLSNQWLLPAS). Residues 102 to 106 (VASCK) are Virion surface-facing. C105 and C188 form a disulfide bridge. A helical membrane pass occupies residues 107–127 (FLSVIYYSSCTVGFATVALIA). Over 128–147 (ADRYRVLHKRTYARQSYRST) the chain is Intravirion. The helical transmembrane segment at 148-168 (YIILLLTWFAGLIFSMPAAVY) threads the bilayer. The Virion surface segment spans residues 169–206 (TTVVIHNGTNGQSSNGHATCVLYFIADEVYTVLLSWKV). A helical membrane pass occupies residues 207 to 227 (LLTLVWGAAPVIMMTWFYAFF). At 228-244 (YSTVQRASQKQRSRTLT) the chain is on the intravirion side. A helical transmembrane segment spans residues 245–265 (FVSVLLISFVALQTPYVSIMI). Topologically, residues 266 to 292 (FNSYATAAWPMDCEHLTLRRTIGTLSR) are virion surface. A helical membrane pass occupies residues 293 to 313 (LVPHLHCLINPILYALLGHDF). At 314–412 (LQRMRQCFRG…SQSHHNLSGV (99 aa)) the chain is on the intravirion side. The disordered stretch occupies residues 377 to 412 (NFPSGTWKGGQKTASNDTSTKIPHRLSQSHHNLSGV). Polar residues predominate over residues 388–397 (KTASNDTSTK).

It belongs to the G-protein coupled receptor 1 family. In terms of assembly, heterodimerizes with US28.

The protein resides in the virion. Its subcellular location is the host cell membrane. The protein localises to the host cytoplasm. Its function is as follows. G-protein-coupled receptor (vGPCR) that constitutively activates multiple oncogenic signaling pathways including STAT3, AP-1, phospholipase C, NF-kappa-B or cAMP-responsive element (CRE) pathways. Plays an important role in viral reactivation from latency through activation of host CREB1, facilitating its recruitment to the viral major immediate early (MIE) genes. In turn, expression of the MIE-driven genes such as UL123 are de-repressed. Also facilitates virus dissemination via the extracellular and cell-to-cell route. In Human cytomegalovirus (strain Merlin) (HHV-5), this protein is G-protein coupled receptor homolog UL33 (UL33).